Consider the following 768-residue polypeptide: Protein ITPRID2 (768 aa).

Disordered stretches follow at residues 1 to 24 (MTTE…AEDS), 39 to 78 (LQAM…ESEE), and 98 to 124 (RKSG…CSPG). 2 stretches are compositionally biased toward polar residues: residues 39 to 57 (LQAM…TVTS) and 102 to 122 (SQDF…STCS). Phosphoserine is present on residues Ser-153, Ser-177, Ser-246, Ser-248, Ser-255, Ser-268, Ser-276, and Ser-312. The segment at 315 to 338 (SVKKEEAPQSEAPRVEECHHGRTP) is disordered. Residues 316–334 (VKKEEAPQSEAPRVEECHH) show a composition bias toward basic and acidic residues. Lys-317 is covalently cross-linked (Glycyl lysine isopeptide (Lys-Gly) (interchain with G-Cter in SUMO2)). Ser-378 and Ser-411 each carry phosphoserine. Residues 468–546 (QELQVMRRSL…GLEEQLRAVR (79 aa)) are a coiled coil. 6 positions are modified to phosphoserine: Ser-549, Ser-564, Ser-569, Ser-572, Ser-627, and Ser-643. 2 disordered regions span residues 605-647 (IPPG…VGKP) and 663-718 (ALTP…AAEE). Residues 610–627 (SSESVFSQATSESSSVCS) are compositionally biased toward polar residues. The residue at position 665 (Thr-665) is a Phosphothreonine. The span at 667–677 (TAPSRTGSVQT) shows a compositional bias: polar residues. Phosphoserine is present on Ser-670. Position 677 is a phosphothreonine (Thr-677). The span at 682–694 (ESSEEVDAAEEAP) shows a compositional bias: acidic residues.

It is found in the cytoplasm. This Pongo abelii (Sumatran orangutan) protein is Protein ITPRID2.